The sequence spans 340 residues: Phosphate acyltransferase (340 aa).

It belongs to the PlsX family. In terms of assembly, homodimer. Probably interacts with PlsY.

It is found in the cytoplasm. The enzyme catalyses a fatty acyl-[ACP] + phosphate = an acyl phosphate + holo-[ACP]. The protein operates within lipid metabolism; phospholipid metabolism. Functionally, catalyzes the reversible formation of acyl-phosphate (acyl-PO(4)) from acyl-[acyl-carrier-protein] (acyl-ACP). This enzyme utilizes acyl-ACP as fatty acyl donor, but not acyl-CoA. In Marinobacter nauticus (strain ATCC 700491 / DSM 11845 / VT8) (Marinobacter aquaeolei), this protein is Phosphate acyltransferase.